The sequence spans 174 residues: Peptide deformylase (174 aa).

Residues cysteine 96 and histidine 138 each coordinate Fe cation. Glutamate 139 is a catalytic residue. Histidine 142 is a Fe cation binding site.

It belongs to the polypeptide deformylase family. It depends on Fe(2+) as a cofactor.

The catalysed reaction is N-terminal N-formyl-L-methionyl-[peptide] + H2O = N-terminal L-methionyl-[peptide] + formate. In terms of biological role, removes the formyl group from the N-terminal Met of newly synthesized proteins. Requires at least a dipeptide for an efficient rate of reaction. N-terminal L-methionine is a prerequisite for activity but the enzyme has broad specificity at other positions. This chain is Peptide deformylase, found in Helicobacter pylori (strain HPAG1).